A 142-amino-acid polypeptide reads, in one-letter code: Putative 2'-deoxynucleoside 5'-phosphate N-hydrolase 1 (142 aa).

Residues 4-10 (FFSGSIR), Y19, H36, E82, and 106-108 (SAM) contribute to the substrate site.

The protein belongs to the 2'-deoxynucleoside 5'-phosphate N-hydrolase 1 family. As to quaternary structure, monomer and homodimer.

The catalysed reaction is a pyrimidine 2'-deoxyribonucleoside 5'-phosphate + H2O = a pyrimidine nucleobase + 2-deoxy-D-ribose 5-phosphate. It carries out the reaction a purine 2'-deoxyribonucleoside 5'-phosphate + H2O = a purine nucleobase + 2-deoxy-D-ribose 5-phosphate. Functionally, catalyzes the cleavage of the N-glycosidic bond of deoxyribonucleoside 5'-monophosphates to yield deoxyribose 5-phosphate and a purine or pyrimidine base. The chain is Putative 2'-deoxynucleoside 5'-phosphate N-hydrolase 1 from Syntrophotalea carbinolica (strain DSM 2380 / NBRC 103641 / GraBd1) (Pelobacter carbinolicus).